A 298-amino-acid polypeptide reads, in one-letter code: 3-deoxy-manno-octulosonate cytidylyltransferase (298 aa).

The chain crosses the membrane as a helical span at residues 22–42 (VWVLHGLALGAAAAAAAVAYL).

It belongs to the KdsB family. The cofactor is Mg(2+). Ubiquitous.

The protein resides in the membrane. The catalysed reaction is 3-deoxy-alpha-D-manno-oct-2-ulosonate + CTP = CMP-3-deoxy-beta-D-manno-octulosonate + diphosphate. It functions in the pathway nucleotide-sugar biosynthesis; CMP-3-deoxy-D-manno-octulosonate biosynthesis; CMP-3-deoxy-D-manno-octulosonate from 3-deoxy-D-manno-octulosonate and CTP: step 1/1. Functionally, catalyzes the production of the sugar nucleotide CMP-3-deoxy-D-manno-octulosonate (CMP-KDO). CTP is the preferred nucleotide donor, and it can partially be replaced with UTP but not with ATP. Activates KDO during the biosynthesis of rhamnogalacturonan II (RG-II), a structurally complex pectic polysaccharide of the primary cell wall. RG-II is essential for the cell wall integrity of rapidly growing tissues and pollen tube growth and elongation. This is 3-deoxy-manno-octulosonate cytidylyltransferase from Zea mays (Maize).